Consider the following 829-residue polypeptide: Leucine--tRNA ligase (829 aa).

Residues 40-50 (PYPSGNIHMGH) carry the 'HIGH' region motif. The short motif at 581 to 585 (KMSKS) is the 'KMSKS' region element. Residue Lys-584 coordinates ATP.

The protein belongs to the class-I aminoacyl-tRNA synthetase family.

It localises to the cytoplasm. The catalysed reaction is tRNA(Leu) + L-leucine + ATP = L-leucyl-tRNA(Leu) + AMP + diphosphate. The sequence is that of Leucine--tRNA ligase from Oleidesulfovibrio alaskensis (strain ATCC BAA-1058 / DSM 17464 / G20) (Desulfovibrio alaskensis).